Here is a 251-residue protein sequence, read N- to C-terminus: Triosephosphate isomerase (251 aa).

9–11 (NWK) provides a ligand contact to substrate. The Electrophile role is filled by histidine 95. Glutamate 167 functions as the Proton acceptor in the catalytic mechanism. Residues glycine 173, serine 213, and 234–235 (GG) contribute to the substrate site.

The protein belongs to the triosephosphate isomerase family. Homodimer.

The protein localises to the cytoplasm. The catalysed reaction is D-glyceraldehyde 3-phosphate = dihydroxyacetone phosphate. It functions in the pathway carbohydrate biosynthesis; gluconeogenesis. The protein operates within carbohydrate degradation; glycolysis; D-glyceraldehyde 3-phosphate from glycerone phosphate: step 1/1. In terms of biological role, involved in the gluconeogenesis. Catalyzes stereospecifically the conversion of dihydroxyacetone phosphate (DHAP) to D-glyceraldehyde-3-phosphate (G3P). The protein is Triosephosphate isomerase of Geotalea uraniireducens (strain Rf4) (Geobacter uraniireducens).